The sequence spans 728 residues: Protein Hook homolog 1 (728 aa).

Met-1 carries the post-translational modification N-acetylmethionine. The interval 1 to 555 (MEDPQPLPQS…LKQKLEAHME (555 aa)) is sufficient for interaction with microtubules. One can recognise a Calponin-homology (CH) domain in the interval 12–128 (LPLCDSLIIW…RLLQLILGCA (117 aa)). 2 coiled-coil regions span residues 168–443 (PASD…LNQA) and 477–658 (LRLQ…AKLR). Ser-235 carries the phosphoserine modification. Positions 481–510 (QEGTENERIEQLQEQLEQKHRKMNELETEQ) are disordered. The interval 657–728 (LRDYEEKLIV…SVKVPAAASD (72 aa)) is sufficient for interaction with AKTIP and VPS18. A phosphoserine mark is found at Ser-719 and Ser-727.

It belongs to the hook family. As to quaternary structure, self-associates. Component of the FTS/Hook/FHIP complex (FHF complex), composed of AKTIP/FTS, FHIP1B, and one or more members of the Hook family of proteins HOOK1, HOOK2, and HOOK3. Interacts directly with AKTIP/FTS, HOOK2 and HOOK3. Associates with several subunits of the homotypic vesicular sorting complex (the HOPS complex) including VPS16, VPS18, VPS39 and VPS41; these interactions may be indirect. Interacts with CCDC181. Interacts (via coiled-coil region) with RIMBP3 (via C-terminus). Interacts with LRGUK (via guanylate kinase-like domain). Interacts with microtubules. May interacts with CLN3. Interacts with AP4M1; the interaction is direct, mediates the interaction between FTS-Hook-FHIP (FHF) complex and AP-4 and the perinuclear distribution of AP-4. In terms of tissue distribution, mainly expressed in testis.

The protein resides in the cytoplasm. It localises to the cytoskeleton. Functionally, component of the FTS/Hook/FHIP complex (FHF complex). The FHF complex may function to promote vesicle trafficking and/or fusion via the homotypic vesicular protein sorting complex (the HOPS complex). FHF complex promotes the distribution of AP-4 complex to the perinuclear area of the cell. Required for spermatid differentiation. Probably involved in the positioning of the microtubules of the manchette and the flagellum in relation to the membrane skeleton. This chain is Protein Hook homolog 1 (Hook1), found in Mus musculus (Mouse).